Reading from the N-terminus, the 149-residue chain is Large ribosomal subunit protein bL9 (149 aa).

It belongs to the bacterial ribosomal protein bL9 family.

Binds to the 23S rRNA. The polypeptide is Large ribosomal subunit protein bL9 (Fervidobacterium nodosum (strain ATCC 35602 / DSM 5306 / Rt17-B1)).